We begin with the raw amino-acid sequence, 172 residues long: Adenine phosphoribosyltransferase (172 aa).

The protein belongs to the purine/pyrimidine phosphoribosyltransferase family. As to quaternary structure, homodimer.

It is found in the cytoplasm. It carries out the reaction AMP + diphosphate = 5-phospho-alpha-D-ribose 1-diphosphate + adenine. The protein operates within purine metabolism; AMP biosynthesis via salvage pathway; AMP from adenine: step 1/1. Its function is as follows. Catalyzes a salvage reaction resulting in the formation of AMP, that is energically less costly than de novo synthesis. The protein is Adenine phosphoribosyltransferase of Polynucleobacter necessarius subsp. necessarius (strain STIR1).